A 275-amino-acid polypeptide reads, in one-letter code: Hydroxyethylthiazole kinase (275 aa).

Met-50 contributes to the substrate binding site. Arg-126 and Ser-171 together coordinate ATP. Substrate is bound at residue Ala-200.

The protein belongs to the Thz kinase family. Requires Mg(2+) as cofactor.

It carries out the reaction 5-(2-hydroxyethyl)-4-methylthiazole + ATP = 4-methyl-5-(2-phosphooxyethyl)-thiazole + ADP + H(+). It functions in the pathway cofactor biosynthesis; thiamine diphosphate biosynthesis; 4-methyl-5-(2-phosphoethyl)-thiazole from 5-(2-hydroxyethyl)-4-methylthiazole: step 1/1. Its function is as follows. Catalyzes the phosphorylation of the hydroxyl group of 4-methyl-5-beta-hydroxyethylthiazole (THZ). This is Hydroxyethylthiazole kinase from Acinetobacter baumannii (strain ACICU).